The sequence spans 153 residues: Endoribonuclease YbeY (153 aa).

Residues H114, H118, and H124 each contribute to the Zn(2+) site.

The protein belongs to the endoribonuclease YbeY family. Requires Zn(2+) as cofactor.

The protein resides in the cytoplasm. In terms of biological role, single strand-specific metallo-endoribonuclease involved in late-stage 70S ribosome quality control and in maturation of the 3' terminus of the 16S rRNA. This is Endoribonuclease YbeY from Shewanella sp. (strain MR-4).